The sequence spans 177 residues: Large ribosomal subunit protein uL6 (177 aa).

Belongs to the universal ribosomal protein uL6 family. As to quaternary structure, part of the 50S ribosomal subunit.

Functionally, this protein binds to the 23S rRNA, and is important in its secondary structure. It is located near the subunit interface in the base of the L7/L12 stalk, and near the tRNA binding site of the peptidyltransferase center. The chain is Large ribosomal subunit protein uL6 from Rickettsia rickettsii (strain Iowa).